Here is a 418-residue protein sequence, read N- to C-terminus: Gamma-glutamyl phosphate reductase (418 aa).

The protein belongs to the gamma-glutamyl phosphate reductase family.

The protein localises to the cytoplasm. The enzyme catalyses L-glutamate 5-semialdehyde + phosphate + NADP(+) = L-glutamyl 5-phosphate + NADPH + H(+). Its pathway is amino-acid biosynthesis; L-proline biosynthesis; L-glutamate 5-semialdehyde from L-glutamate: step 2/2. Its function is as follows. Catalyzes the NADPH-dependent reduction of L-glutamate 5-phosphate into L-glutamate 5-semialdehyde and phosphate. The product spontaneously undergoes cyclization to form 1-pyrroline-5-carboxylate. This is Gamma-glutamyl phosphate reductase from Desulforapulum autotrophicum (strain ATCC 43914 / DSM 3382 / VKM B-1955 / HRM2) (Desulfobacterium autotrophicum).